A 122-amino-acid chain; its full sequence is Large ribosomal subunit protein uL14 (122 aa).

This sequence belongs to the universal ribosomal protein uL14 family. As to quaternary structure, part of the 50S ribosomal subunit. Forms a cluster with proteins L3 and L19. In the 70S ribosome, L14 and L19 interact and together make contacts with the 16S rRNA in bridges B5 and B8.

Functionally, binds to 23S rRNA. Forms part of two intersubunit bridges in the 70S ribosome. The protein is Large ribosomal subunit protein uL14 of Mycobacterium tuberculosis (strain ATCC 25177 / H37Ra).